Reading from the N-terminus, the 243-residue chain is Probable transcriptional regulator ycf27 (243 aa).

The region spanning 7–120 is the Response regulatory domain; it reads KILVVDDEAS…ELEARIRSVL (114 aa). At D56 the chain carries 4-aspartylphosphate. Residues 76–94 constitute a DNA-binding region (H-T-H motif); the sequence is DVPIIMLTALGEVCDRITG. The ompR/PhoB-type DNA-binding region spans 135 to 236; the sequence is SGIISIGFLK…ARGTGYLFQR (102 aa).

Its subcellular location is the plastid. The protein localises to the chloroplast. In terms of biological role, probable promoter-specific protein mediating the interaction between DNA and RNA polymerase. In Porphyra purpurea (Red seaweed), this protein is Probable transcriptional regulator ycf27 (ycf27).